A 609-amino-acid chain; its full sequence is UvrABC system protein C (609 aa).

The 79-residue stretch at 16–94 (SSAGVYRMYD…IKQYMPKYNV (79 aa)) folds into the GIY-YIG domain. The 36-residue stretch at 203–238 (KQVISELVAKMEEAAEQQAYEQAARFRDQIMALRRV) folds into the UVR domain.

It belongs to the UvrC family. In terms of assembly, interacts with UvrB in an incision complex.

The protein localises to the cytoplasm. In terms of biological role, the UvrABC repair system catalyzes the recognition and processing of DNA lesions. UvrC both incises the 5' and 3' sides of the lesion. The N-terminal half is responsible for the 3' incision and the C-terminal half is responsible for the 5' incision. The sequence is that of UvrABC system protein C from Shewanella oneidensis (strain ATCC 700550 / JCM 31522 / CIP 106686 / LMG 19005 / NCIMB 14063 / MR-1).